The chain runs to 455 residues: L-serine dehydratase (455 aa).

It belongs to the iron-sulfur dependent L-serine dehydratase family. [4Fe-4S] cluster serves as cofactor.

The catalysed reaction is L-serine = pyruvate + NH4(+). It participates in carbohydrate biosynthesis; gluconeogenesis. This is L-serine dehydratase (sdaA) from Streptomyces coelicolor (strain ATCC BAA-471 / A3(2) / M145).